A 284-amino-acid polypeptide reads, in one-letter code: Bifunctional protein FolD (284 aa).

Residues 165–167, S190, and I231 each bind NADP(+); that span reads GRS.

This sequence belongs to the tetrahydrofolate dehydrogenase/cyclohydrolase family. Homodimer.

It catalyses the reaction (6R)-5,10-methylene-5,6,7,8-tetrahydrofolate + NADP(+) = (6R)-5,10-methenyltetrahydrofolate + NADPH. It carries out the reaction (6R)-5,10-methenyltetrahydrofolate + H2O = (6R)-10-formyltetrahydrofolate + H(+). It functions in the pathway one-carbon metabolism; tetrahydrofolate interconversion. Catalyzes the oxidation of 5,10-methylenetetrahydrofolate to 5,10-methenyltetrahydrofolate and then the hydrolysis of 5,10-methenyltetrahydrofolate to 10-formyltetrahydrofolate. The sequence is that of Bifunctional protein FolD from Streptococcus thermophilus (strain ATCC BAA-491 / LMD-9).